Here is a 255-residue protein sequence, read N- to C-terminus: Hemin import ATP-binding protein HmuV (255 aa).

The ABC transporter domain occupies 2–238 (LRAHNLHIRR…ESLKAVFGLE (237 aa)). Residue 34-41 (GPNGAGKS) participates in ATP binding.

This sequence belongs to the ABC transporter superfamily. Heme (hemin) importer (TC 3.A.1.14.5) family. The complex is composed of two ATP-binding proteins (HmuV), two transmembrane proteins (HmuU) and a solute-binding protein (HmuT).

It is found in the cell inner membrane. Functionally, part of the ABC transporter complex HmuTUV involved in hemin import. Responsible for energy coupling to the transport system. This is Hemin import ATP-binding protein HmuV from Pseudomonas fluorescens (strain Pf0-1).